The following is a 390-amino-acid chain: Lipid droplet-regulating VLDL assembly factor AUP1 homolog (390 aa).

The Cytoplasmic portion of the chain corresponds to 1–32 (MASPEASSSGNTEDLRIEDLFHQKRNEDTIAK). Residues 33–53 (IFSIIYAPVGLIILLIRVFLG) lie within the membrane without spanning it. Topologically, residues 54–390 (FHTFIVACLL…NRQKYMNRDS (337 aa)) are cytoplasmic. The CUE domain maps to 305-347 (QMDECAMRIKQSFPSFHLSAIRRDLEKTRSQTTTVNNLKAGKI).

The protein belongs to the AUP1 family.

The protein resides in the endoplasmic reticulum membrane. It is found in the lipid droplet. The protein is Lipid droplet-regulating VLDL assembly factor AUP1 homolog of Caenorhabditis elegans.